We begin with the raw amino-acid sequence, 115 residues long: Large ribosomal subunit protein bL20 (115 aa).

The protein belongs to the bacterial ribosomal protein bL20 family.

Functionally, binds directly to 23S ribosomal RNA and is necessary for the in vitro assembly process of the 50S ribosomal subunit. It is not involved in the protein synthesizing functions of that subunit. In Bdellovibrio bacteriovorus (strain ATCC 15356 / DSM 50701 / NCIMB 9529 / HD100), this protein is Large ribosomal subunit protein bL20.